The primary structure comprises 95 residues: Aspartyl/glutamyl-tRNA(Asn/Gln) amidotransferase subunit C (95 aa).

This sequence belongs to the GatC family. As to quaternary structure, heterotrimer of A, B and C subunits.

The catalysed reaction is L-glutamyl-tRNA(Gln) + L-glutamine + ATP + H2O = L-glutaminyl-tRNA(Gln) + L-glutamate + ADP + phosphate + H(+). The enzyme catalyses L-aspartyl-tRNA(Asn) + L-glutamine + ATP + H2O = L-asparaginyl-tRNA(Asn) + L-glutamate + ADP + phosphate + 2 H(+). Allows the formation of correctly charged Asn-tRNA(Asn) or Gln-tRNA(Gln) through the transamidation of misacylated Asp-tRNA(Asn) or Glu-tRNA(Gln) in organisms which lack either or both of asparaginyl-tRNA or glutaminyl-tRNA synthetases. The reaction takes place in the presence of glutamine and ATP through an activated phospho-Asp-tRNA(Asn) or phospho-Glu-tRNA(Gln). This Azoarcus sp. (strain BH72) protein is Aspartyl/glutamyl-tRNA(Asn/Gln) amidotransferase subunit C.